A 363-amino-acid polypeptide reads, in one-letter code: Flagellar P-ring protein (363 aa).

The N-terminal stretch at 1-20 (MKCKLIFAVFMLAFSMPSQA) is a signal peptide.

Belongs to the FlgI family. As to quaternary structure, the basal body constitutes a major portion of the flagellar organelle and consists of four rings (L,P,S, and M) mounted on a central rod.

The protein localises to the periplasm. The protein resides in the bacterial flagellum basal body. Assembles around the rod to form the L-ring and probably protects the motor/basal body from shearing forces during rotation. The sequence is that of Flagellar P-ring protein from Shewanella oneidensis (strain ATCC 700550 / JCM 31522 / CIP 106686 / LMG 19005 / NCIMB 14063 / MR-1).